A 268-amino-acid polypeptide reads, in one-letter code: Mitochondrial distribution and morphology protein 12 (268 aa).

An SMP-LTD domain is found at 1–256 (MSFEINWQDL…WPSWINLDFN (256 aa)). Residues 75 to 94 (LPKDKIPEESDSGCQSADGE) are disordered.

It belongs to the MDM12 family. Component of the ER-mitochondria encounter structure (ERMES) or MDM complex, composed of MMM1, MDM10, MDM12 and MDM34. An MMM1 homodimer associates with one molecule of MDM12 on each side in a pairwise head-to-tail manner, and the SMP-LTD domains of MMM1 and MDM12 generate a continuous hydrophobic tunnel for phospholipid trafficking.

It localises to the mitochondrion outer membrane. The protein resides in the endoplasmic reticulum membrane. Its function is as follows. Component of the ERMES/MDM complex, which serves as a molecular tether to connect the endoplasmic reticulum (ER) and mitochondria. Components of this complex are involved in the control of mitochondrial shape and protein biogenesis, and function in nonvesicular lipid trafficking between the ER and mitochondria. MDM12 is required for the interaction of the ER-resident membrane protein MMM1 and the outer mitochondrial membrane-resident beta-barrel protein MDM10. The MDM12-MMM1 subcomplex functions in the major beta-barrel assembly pathway that is responsible for biogenesis of all mitochondrial outer membrane beta-barrel proteins, and acts in a late step after the SAM complex. The MDM10-MDM12-MMM1 subcomplex further acts in the TOM40-specific pathway after the action of the MDM12-MMM1 complex. Essential for establishing and maintaining the structure of mitochondria and maintenance of mtDNA nucleoids. The sequence is that of Mitochondrial distribution and morphology protein 12 from Lachancea thermotolerans (strain ATCC 56472 / CBS 6340 / NRRL Y-8284) (Yeast).